The chain runs to 257 residues: UPF0246 protein Shewana3_3143 (257 aa).

It belongs to the UPF0246 family.

This Shewanella sp. (strain ANA-3) protein is UPF0246 protein Shewana3_3143.